A 329-amino-acid polypeptide reads, in one-letter code: Aspartate carbamoyltransferase catalytic subunit (329 aa).

2 residues coordinate carbamoyl phosphate: Arg-66 and Thr-67. Lys-94 provides a ligand contact to L-aspartate. Carbamoyl phosphate contacts are provided by Arg-116, His-149, and Gln-152. Positions 189 and 243 each coordinate L-aspartate. Carbamoyl phosphate contacts are provided by Gly-284 and Pro-285.

Belongs to the aspartate/ornithine carbamoyltransferase superfamily. ATCase family. Heterododecamer (2C3:3R2) of six catalytic PyrB chains organized as two trimers (C3), and six regulatory PyrI chains organized as three dimers (R2).

It catalyses the reaction carbamoyl phosphate + L-aspartate = N-carbamoyl-L-aspartate + phosphate + H(+). It functions in the pathway pyrimidine metabolism; UMP biosynthesis via de novo pathway; (S)-dihydroorotate from bicarbonate: step 2/3. In terms of biological role, catalyzes the condensation of carbamoyl phosphate and aspartate to form carbamoyl aspartate and inorganic phosphate, the committed step in the de novo pyrimidine nucleotide biosynthesis pathway. The chain is Aspartate carbamoyltransferase catalytic subunit from Gloeobacter violaceus (strain ATCC 29082 / PCC 7421).